Reading from the N-terminus, the 404-residue chain is S-adenosylmethionine synthase (404 aa).

139-144 (GKGSSD) is an ATP binding site.

The protein belongs to the AdoMet synthase 2 family. It depends on Mg(2+) as a cofactor.

The enzyme catalyses L-methionine + ATP + H2O = S-adenosyl-L-methionine + phosphate + diphosphate. It participates in amino-acid biosynthesis; S-adenosyl-L-methionine biosynthesis; S-adenosyl-L-methionine from L-methionine: step 1/1. Its function is as follows. Catalyzes the formation of S-adenosylmethionine from methionine and ATP. This is S-adenosylmethionine synthase from Saccharolobus solfataricus (strain ATCC 35092 / DSM 1617 / JCM 11322 / P2) (Sulfolobus solfataricus).